A 455-amino-acid polypeptide reads, in one-letter code: Protein FAM124B (455 aa).

Ser-49 is subject to Phosphoserine. Residues 270-322 (TSVSAKRTSEPRSQRNQGKRSQGHSLELPEPSGSPTSDRCAGTSWKSPGRSFQ) are disordered. Positions 313-322 (SWKSPGRSFQ) are enriched in polar residues.

It belongs to the FAM124 family. As to quaternary structure, interacts with CHD7 and CHD8.

The protein resides in the nucleus. The protein is Protein FAM124B (FAM124B) of Homo sapiens (Human).